The sequence spans 593 residues: Efflux pump FUBT (593 aa).

Residues 1 to 44 are disordered; sequence MAIDPQPSSPSLSSETIANDTIGNDNNVNEPSVEPKTQENQHTV. A compositionally biased stretch (polar residues) spans 9–30; that stretch reads SPSLSSETIANDTIGNDNNVNE. An N-linked (GlcNAc...) asparagine glycan is attached at Asn-19. The next 12 helical transmembrane spans lie at 98–118, 135–155, 167–187, 195–215, 227–247, 254–274, 337–357, 367–387, 410–430, 438–458, 468–488, and 503–523; these read WAFV…SSAY, VATL…LIWA, FFFT…AGSI, FLTG…IADM, MFSG…GFLG, WLHG…TVFI, IYIS…PIVF, IGGL…ISFA, LPPA…FAWT, IVPI…FMAL, IFAA…GAAF, and WASS…FLFY. Positions 570-593 are disordered; that stretch reads THNSHASAAHSHGHRRSLSYTRSV.

Belongs to the major facilitator superfamily. DHA1 family. Polyamines/proton antiporter (TC 2.A.1.2.16) subfamily.

It is found in the cell membrane. In terms of biological role, efflux pump involved in export of fusaric acid, a mycotoxin with low to moderate toxicity to animals and humans, but with high phytotoxic properties. Constitutes a self-protecting mechanism of the fungus against critical levels of FSA within the cell. The chain is Efflux pump FUBT from Fusarium oxysporum (Fusarium vascular wilt).